Here is a 132-residue protein sequence, read N- to C-terminus: Salivary cystatin-L2 (132 aa).

Residues 1-18 (MTSSLALVLVFGGAAVCA) form the signal peptide. A Cystatin domain is found at 28-117 (ERSNQDDPEY…RTCTTVIYRN (90 aa)). The required for interaction with mouse ANXA2 stretch occupies residues 87 to 131 (TCELTSTYNKDTCQANANAAQRTCTTVIYRNLQGEKSISSFECAA). 2 disulfides stabilise this stretch: Cys-88–Cys-99 and Cys-110–Cys-129.

The protein belongs to the cystatin family. As to quaternary structure, monomer. Interacts (via loop 2) with mouse ANXA2; the interaction results in reduced activation of mouse NLRC4 inflammasome formation upon Anaplasma phagocytophilum infection. In terms of tissue distribution, detected in salivary gland and midgut.

The protein localises to the secreted. Functionally, contributes to the suppression of the host's immune response to tick salivary proteins and is important for successful feeding on hosts. Inhibitor of cysteine proteinases. Inhibits host immune responses, probably via its inhibition of host cathepsins. Inhibits host papain (in vitro). Inhibits host cathepsin L (CTSL) (in vitro). Inhibits host cathepsin L2 (CTSV) (in vitro). Attenuates IFN-beta (IFNB1)-triggered JAK/STAT signaling pathway in mouse dendritic cells. Suppresses induction of interferon-stimulated gene IRF7 and production of CXCL10 in lipopolysaccharide (LPS)-activated dendritic cells. Its function is as follows. (Microbial infection) Down-regulates TLR2-mediated host responses to infection by Borrelia burgdorferi and the production of chemokines CCL3 and CXCL10 by host dendritic cells. Enhances infection by the tick-transmitted pathogen B.burgdorferi (in vitro). In terms of biological role, (Microbial infection) Inhibits host inflammatory responses to Anaplasma phagocytophilum infection. Interacts with mouse ANXA2 and suppresses oligomerization of NLRC4, a key component of host inflammasomes that sense A.phagocytophilum infection. Indirectly targets caspase-1 (CASP1) activation and subsequent IL-1beta (IL1B) and IL18 release by inhibiting reactive oxygen species (ROS) production from NADPH oxidase complex in A.phagocytophilum-infected mouse macrophages. (Microbial infection) Promotes replication of tick-borne encephalitis virus in mouse dendritic cells and reduces anti-viral effect of host IFN-beta (IFNB1). This chain is Salivary cystatin-L2, found in Ixodes scapularis (Black-legged tick).